The following is a 243-amino-acid chain: NifU-like scaffold protein (243 aa).

Belongs to the NifU family. Homodimer.

The protein resides in the plastid. Its subcellular location is the apicoplast. It functions in the pathway cofactor biosynthesis; iron-sulfur cluster biosynthesis. In terms of biological role, binds and transfers [4Fe-4S] iron-sulfur clusters to target proteins. The sequence is that of NifU-like scaffold protein from Plasmodium berghei (strain Anka).